We begin with the raw amino-acid sequence, 668 residues long: UvrABC system protein B (668 aa).

The Helicase ATP-binding domain maps to 25–170 (NSILLGNKYQ…FVGQKISIKE (146 aa)). An ATP-binding site is contributed by 38–45 (GVTGSGKT). Positions 91–114 (YYDYYQPESYVPSKDLFIEKEATI) match the Beta-hairpin motif. A Helicase C-terminal domain is found at 429-595 (QMEDLYSEIQ…TIVKKIQNIL (167 aa)). Residues 622–657 (KKLIDKLKFDLEEAVNDERFEDAIVLRDKIKELSSK) enclose the UVR domain.

It belongs to the UvrB family. Forms a heterotetramer with UvrA during the search for lesions. Interacts with UvrC in an incision complex.

The protein resides in the cytoplasm. In terms of biological role, the UvrABC repair system catalyzes the recognition and processing of DNA lesions. A damage recognition complex composed of 2 UvrA and 2 UvrB subunits scans DNA for abnormalities. Upon binding of the UvrA(2)B(2) complex to a putative damaged site, the DNA wraps around one UvrB monomer. DNA wrap is dependent on ATP binding by UvrB and probably causes local melting of the DNA helix, facilitating insertion of UvrB beta-hairpin between the DNA strands. Then UvrB probes one DNA strand for the presence of a lesion. If a lesion is found the UvrA subunits dissociate and the UvrB-DNA preincision complex is formed. This complex is subsequently bound by UvrC and the second UvrB is released. If no lesion is found, the DNA wraps around the other UvrB subunit that will check the other stand for damage. The chain is UvrABC system protein B from Borreliella burgdorferi (strain ZS7) (Borrelia burgdorferi).